Here is an 88-residue protein sequence, read N- to C-terminus: Exodeoxyribonuclease 7 small subunit (88 aa).

It belongs to the XseB family. As to quaternary structure, heterooligomer composed of large and small subunits.

It localises to the cytoplasm. The enzyme catalyses Exonucleolytic cleavage in either 5'- to 3'- or 3'- to 5'-direction to yield nucleoside 5'-phosphates.. Functionally, bidirectionally degrades single-stranded DNA into large acid-insoluble oligonucleotides, which are then degraded further into small acid-soluble oligonucleotides. The protein is Exodeoxyribonuclease 7 small subunit of Tolumonas auensis (strain DSM 9187 / NBRC 110442 / TA 4).